The sequence spans 295 residues: UDP-N-acetylenolpyruvoylglucosamine reductase (295 aa).

The region spanning 24 to 188 (KVGGDAEIFF…LKAVFKVNKG (165 aa)) is the FAD-binding PCMH-type domain. Arginine 168 is a catalytic residue. The active-site Proton donor is the serine 217. Glutamate 287 is an active-site residue.

It belongs to the MurB family. The cofactor is FAD.

The protein resides in the cytoplasm. The enzyme catalyses UDP-N-acetyl-alpha-D-muramate + NADP(+) = UDP-N-acetyl-3-O-(1-carboxyvinyl)-alpha-D-glucosamine + NADPH + H(+). It participates in cell wall biogenesis; peptidoglycan biosynthesis. In terms of biological role, cell wall formation. The sequence is that of UDP-N-acetylenolpyruvoylglucosamine reductase from Rickettsia akari (strain Hartford).